Here is a 201-residue protein sequence, read N- to C-terminus: Lipopolysaccharide core heptose(II)-phosphate phosphatase (201 aa).

The N-terminal stretch at 1 to 33 is a signal peptide; the sequence is MLAFTLRFIKNKRYFAILAGALVIIAGLASQHA.

This sequence belongs to the phosphoglycerate mutase family. Ais subfamily.

It is found in the periplasm. It participates in bacterial outer membrane biogenesis; lipopolysaccharide metabolism. Catalyzes the dephosphorylation of heptose(II) of the outer membrane lipopolysaccharide core. The protein is Lipopolysaccharide core heptose(II)-phosphate phosphatase of Salmonella typhi.